Here is a 660-residue protein sequence, read N- to C-terminus: uncharacterized protein (660 aa).

Residues 1 to 660 form a disordered region; sequence MGTPCQSARG…RNPGCPRTWR (660 aa). The span at 67-80 shows a compositional bias: gly residues; the sequence is RPGGGNRVGAGRGR. Positions 104–116 are enriched in polar residues; sequence SNPTGGCSDPQRS. A run of 4 repeats spans residues 149-273, 274-398, 399-523, and 524-648. The 4 X 125 AA tandem repeats stretch occupies residues 149–648; it reads SARNPGCPRT…THRRPPGCPR (500 aa). Low complexity-rich tracts occupy residues 177-196, 302-321, 427-446, and 552-571; these read RPSG…GTPA.

This is an uncharacterized protein from Homo sapiens (Human).